The chain runs to 404 residues: 26S proteasome regulatory subunit 6A-B (404 aa).

192–199 (GPPGTGKT) is a binding site for ATP.

It belongs to the AAA ATPase family. As to quaternary structure, may form a heterodimer with a related family member.

The protein localises to the cytoplasm. It is found in the nucleus. Functionally, the 26S proteasome is involved in the ATP-dependent degradation of ubiquitinated proteins. The regulatory (or ATPase) complex confers ATP dependency and substrate specificity to the 26S complex. This Xenopus laevis (African clawed frog) protein is 26S proteasome regulatory subunit 6A-B (psmc3-b).